The chain runs to 247 residues: Cyclin-Q (247 aa).

It belongs to the cyclin family. Cyclin-like FAM58 subfamily.

May be an activating cyclin for the cyclin-associated kinase CDK10. This is Cyclin-Q (ccnq) from Danio rerio (Zebrafish).